Reading from the N-terminus, the 566-residue chain is Poly(A) polymerase pla1 (566 aa).

ATP-binding positions include 86 to 88 (YGS), 99 to 101 (DID), aspartate 153, lysine 214, tyrosine 223, and 232 to 233 (GV). 3 residues coordinate Mg(2+): aspartate 99, aspartate 101, and aspartate 153. Disordered stretches follow at residues 437 to 463 (HEKL…SENG) and 530 to 566 (DEVF…VSTA).

It belongs to the poly(A) polymerase family. Mg(2+) is required as a cofactor. Requires Mn(2+) as cofactor.

The protein resides in the nucleus. It catalyses the reaction RNA(n) + ATP = RNA(n)-3'-adenine ribonucleotide + diphosphate. Functionally, polymerase that creates the 3'-poly(A) tail of mRNA's. May acquire specificity through interaction with a cleavage and polyadenylation factor (CF I). This chain is Poly(A) polymerase pla1 (pla1), found in Schizosaccharomyces pombe (strain 972 / ATCC 24843) (Fission yeast).